A 186-amino-acid polypeptide reads, in one-letter code: Large ribosomal subunit protein eL18 (186 aa).

The protein belongs to the eukaryotic ribosomal protein eL18 family. As to quaternary structure, component of the large ribosomal subunit. Mature ribosomes consist of a small (40S) and a large (60S) subunit. The 40S subunit contains about 32 different proteins and 1 molecule of RNA (18S). The 60S subunit contains 45 different proteins and 3 molecules of RNA (25S, 5.8S and 5S).

Its subcellular location is the cytoplasm. Functionally, component of the ribosome, a large ribonucleoprotein complex responsible for the synthesis of proteins in the cell. The small ribosomal subunit (SSU) binds messenger RNAs (mRNAs) and translates the encoded message by selecting cognate aminoacyl-transfer RNA (tRNA) molecules. The large subunit (LSU) contains the ribosomal catalytic site termed the peptidyl transferase center (PTC), which catalyzes the formation of peptide bonds, thereby polymerizing the amino acids delivered by tRNAs into a polypeptide chain. The nascent polypeptides leave the ribosome through a tunnel in the LSU and interact with protein factors that function in enzymatic processing, targeting, and the membrane insertion of nascent chains at the exit of the ribosomal tunnel. The chain is Large ribosomal subunit protein eL18 from Candida albicans (strain SC5314 / ATCC MYA-2876) (Yeast).